Here is a 707-residue protein sequence, read N- to C-terminus: DNA ligase (707 aa).

Positions 1 to 23 (MSSKATQDPEAVLAEQSDDATEA) are disordered. NAD(+) contacts are provided by residues 53-57 (DAEFD), 103-104 (SL), and Glu133. Lys135 acts as the N6-AMP-lysine intermediate in catalysis. Residues Arg156, Glu196, Lys315, and Lys339 each coordinate NAD(+). Zn(2+)-binding residues include Cys433, Cys436, Cys452, and Cys458. The BRCT domain occupies 622–707 (SIERTLDGLS…LENGPDTPDS (86 aa)).

Belongs to the NAD-dependent DNA ligase family. LigA subfamily. Mg(2+) is required as a cofactor. It depends on Mn(2+) as a cofactor.

It catalyses the reaction NAD(+) + (deoxyribonucleotide)n-3'-hydroxyl + 5'-phospho-(deoxyribonucleotide)m = (deoxyribonucleotide)n+m + AMP + beta-nicotinamide D-nucleotide.. In terms of biological role, DNA ligase that catalyzes the formation of phosphodiester linkages between 5'-phosphoryl and 3'-hydroxyl groups in double-stranded DNA using NAD as a coenzyme and as the energy source for the reaction. It is essential for DNA replication and repair of damaged DNA. In Mycolicibacterium vanbaalenii (strain DSM 7251 / JCM 13017 / BCRC 16820 / KCTC 9966 / NRRL B-24157 / PYR-1) (Mycobacterium vanbaalenii), this protein is DNA ligase.